The primary structure comprises 97 residues: YcgL domain-containing protein PFL_1496 (97 aa).

Residues 3–87 enclose the YcgL domain; sequence RICSIYKSPR…AEDEYIEHLP (85 aa).

The protein is YcgL domain-containing protein PFL_1496 of Pseudomonas fluorescens (strain ATCC BAA-477 / NRRL B-23932 / Pf-5).